We begin with the raw amino-acid sequence, 86 residues long: MKNLIAELLFKLAQKEEESKELCAQVEALEIIVTAMLRNMAQNDQQRLIDQVEGALYEVKPDASIPDDDTELLRDYVKKLLKHPCQ.

Residues Met1 to Met36 adopt a coiled-coil conformation.

Belongs to the IraP family. As to quaternary structure, interacts with RssB.

It is found in the cytoplasm. In terms of biological role, inhibits RpoS proteolysis by regulating RssB activity, thereby increasing the stability of the sigma stress factor RpoS especially during phosphate starvation, but also in stationary phase and during nitrogen starvation. Its effect on RpoS stability is due to its interaction with RssB, which probably blocks the interaction of RssB with RpoS, and the consequent delivery of the RssB-RpoS complex to the ClpXP protein degradation pathway. This is Anti-adapter protein IraP from Shigella flexneri serotype 5b (strain 8401).